The primary structure comprises 118 residues: Large ribosomal subunit protein bL19 (118 aa).

This sequence belongs to the bacterial ribosomal protein bL19 family.

This protein is located at the 30S-50S ribosomal subunit interface and may play a role in the structure and function of the aminoacyl-tRNA binding site. The protein is Large ribosomal subunit protein bL19 of Dictyoglomus turgidum (strain DSM 6724 / Z-1310).